Here is a 198-residue protein sequence, read N- to C-terminus: Elongation factor Ts (198 aa).

An involved in Mg(2+) ion dislocation from EF-Tu region spans residues 81–84 (TDFV).

Belongs to the EF-Ts family.

Its subcellular location is the cytoplasm. Associates with the EF-Tu.GDP complex and induces the exchange of GDP to GTP. It remains bound to the aminoacyl-tRNA.EF-Tu.GTP complex up to the GTP hydrolysis stage on the ribosome. The sequence is that of Elongation factor Ts from Herpetosiphon aurantiacus (strain ATCC 23779 / DSM 785 / 114-95).